We begin with the raw amino-acid sequence, 778 residues long: Dolichyl-phosphate-mannose--protein mannosyltransferase 4 (778 aa).

Residues 1-28 (MASKSEKAVKKAQKLSKEPSVELTDTKS) show a composition bias toward basic and acidic residues. The disordered stretch occupies residues 1–44 (MASKSEKAVKKAQKLSKEPSVELTDTKSSDNVTPKQKSPNSTEE). Residues 29–41 (SDNVTPKQKSPNS) show a composition bias toward polar residues. The N-linked (GlcNAc...) asparagine glycan is linked to Asn-40. Transmembrane regions (helical) follow at residues 60 to 80 (LAFV…LNLP), 103 to 123 (FFDL…KLAG), 145 to 165 (VTIR…VFLI), 196 to 216 (ILLD…YVRF), 223 to 243 (PFSR…SCTI), 248 to 268 (VGFF…WYLW), and 288 to 308 (FCLI…HFNI). Asn-335 is a glycosylation site (N-linked (GlcNAc...) asparagine). MIR domains lie at 336-396 (STIL…ILPA), 408-467 (NVPV…VVMS), and 474-529 (RPLY…FDDI). Helical transmembrane passes span 608–628 (WWII…EILL), 644–664 (FYRS…PFFI), 669–689 (LFLH…GAFI), and 726–746 (VIEL…FTFF).

The protein belongs to the glycosyltransferase 39 family.

The protein localises to the endoplasmic reticulum membrane. The catalysed reaction is a di-trans,poly-cis-dolichyl beta-D-mannosyl phosphate + L-seryl-[protein] = 3-O-(alpha-D-mannosyl)-L-seryl-[protein] + a di-trans,poly-cis-dolichyl phosphate + H(+). The enzyme catalyses a di-trans,poly-cis-dolichyl beta-D-mannosyl phosphate + L-threonyl-[protein] = 3-O-(alpha-D-mannosyl)-L-threonyl-[protein] + a di-trans,poly-cis-dolichyl phosphate + H(+). It functions in the pathway protein modification; protein glycosylation. Transfers mannose from Dol-P-mannose to Ser or Thr residues on proteins. Required for normal cell wall and septum formation. The protein is Dolichyl-phosphate-mannose--protein mannosyltransferase 4 (ogm4) of Schizosaccharomyces pombe (strain 972 / ATCC 24843) (Fission yeast).